The chain runs to 698 residues: Polyribonucleotide nucleotidyltransferase (698 aa).

Positions 487 and 493 each coordinate Mg(2+). In terms of domain architecture, KH spans 555-614; it reads PKIIQIQIDPQKIGDVVGQRGKTINAIIEQTGVKIDINDEGAVSVCGTDKDMMDKAINMI. Residues 624 to 692 form the S1 motif domain; it reads GQVFEGKVIS…KMGRISFSIK (69 aa).

Belongs to the polyribonucleotide nucleotidyltransferase family. Mg(2+) is required as a cofactor.

It is found in the cytoplasm. It carries out the reaction RNA(n+1) + phosphate = RNA(n) + a ribonucleoside 5'-diphosphate. Its function is as follows. Involved in mRNA degradation. Catalyzes the phosphorolysis of single-stranded polyribonucleotides processively in the 3'- to 5'-direction. This Lachnoclostridium phytofermentans (strain ATCC 700394 / DSM 18823 / ISDg) (Clostridium phytofermentans) protein is Polyribonucleotide nucleotidyltransferase.